Here is a 246-residue protein sequence, read N- to C-terminus: uncharacterized protein (246 aa).

The protein belongs to the IIV-6 170L family.

This is an uncharacterized protein from Acheta domesticus (House cricket).